The chain runs to 144 residues: Subtilisin inhibitor (144 aa).

Positions 1–12 are enriched in low complexity; that stretch reads MRNTGAGPSPSV. Residues 1–25 are disordered; it reads MRNTGAGPSPSVSRPPPSAAPLSGA. An N-terminal signal peptide occupies residues 1–31; the sequence is MRNTGAGPSPSVSRPPPSAAPLSGAALAAPG. 2 consecutive repeats follow at residues 33 to 37 and 39 to 43; these read APSAL. 2 disulfide bridges follow: Cys-66–Cys-81 and Cys-102–Cys-132.

It belongs to the protease inhibitor I16 (SSI) family. In terms of assembly, homodimer.

The protein resides in the secreted. Functionally, strong inhibitor of bacterial serine proteases such as subtilisin. The protein is Subtilisin inhibitor (ssi) of Streptomyces albogriseolus.